Reading from the N-terminus, the 262-residue chain is Putative ABC transporter ATP-binding protein SAV_3608 (262 aa).

The ABC transporter domain occupies 18–248 (LDVAGLAFAY…DTLMRAHRLE (231 aa)). 51 to 58 (GPNGAGKT) provides a ligand contact to ATP.

Belongs to the ABC transporter superfamily.

It localises to the cell membrane. Its function is as follows. Probably part of an ABC transporter complex. Responsible for energy coupling to the transport system. The chain is Putative ABC transporter ATP-binding protein SAV_3608 from Streptomyces avermitilis (strain ATCC 31267 / DSM 46492 / JCM 5070 / NBRC 14893 / NCIMB 12804 / NRRL 8165 / MA-4680).